The chain runs to 192 residues: Leucine-rich repeat-containing protein 51 (192 aa).

LRR repeat units lie at residues 49–71 (SLTQSLWLNNNVLNDLRDFNQVA), 80–101 (NLAWIDLSFNDLTSIDPVLTTF), and 103–124 (NLSVLYLHGNSIQRLGEVNKLA). The LRRCT domain occupies 137-175 (NPMEEEKGYRQYVLCTLSRITTFDFAGVTKADRTTAEVW).

Its subcellular location is the cytoplasm. This is Leucine-rich repeat-containing protein 51 from Pan troglodytes (Chimpanzee).